The chain runs to 721 residues: Putative cullin-like protein 1 (721 aa).

Positions aspartate 651–asparagine 713 constitute a Cullin neddylation domain.

The protein belongs to the cullin family.

This chain is Putative cullin-like protein 1, found in Arabidopsis thaliana (Mouse-ear cress).